We begin with the raw amino-acid sequence, 429 residues long: Enolase (429 aa).

A (2R)-2-phosphoglycerate-binding site is contributed by Q167. The Proton donor role is filled by E209. 3 residues coordinate Mg(2+): D246, E289, and D316. Positions 341, 370, 371, and 392 each coordinate (2R)-2-phosphoglycerate. The Proton acceptor role is filled by K341.

This sequence belongs to the enolase family. In terms of assembly, component of the RNA degradosome, a multiprotein complex involved in RNA processing and mRNA degradation. The cofactor is Mg(2+).

The protein resides in the cytoplasm. Its subcellular location is the secreted. It is found in the cell surface. It carries out the reaction (2R)-2-phosphoglycerate = phosphoenolpyruvate + H2O. The protein operates within carbohydrate degradation; glycolysis; pyruvate from D-glyceraldehyde 3-phosphate: step 4/5. Functionally, catalyzes the reversible conversion of 2-phosphoglycerate (2-PG) into phosphoenolpyruvate (PEP). It is essential for the degradation of carbohydrates via glycolysis. This Pseudomonas entomophila (strain L48) protein is Enolase.